The sequence spans 296 residues: NADH-cytochrome b5 reductase 2 (296 aa).

Residues Leu-2–Ala-24 form a helical membrane-spanning segment. The region spanning Asn-35–Lys-147 is the FAD-binding FR-type domain. Residues Asp-127–Gly-142 and Val-166–Leu-201 contribute to the FAD site.

This sequence belongs to the flavoprotein pyridine nucleotide cytochrome reductase family. The cofactor is FAD.

The protein localises to the membrane. The enzyme catalyses 2 Fe(III)-[cytochrome b5] + NADH = 2 Fe(II)-[cytochrome b5] + NAD(+) + H(+). NADH-cytochrome b5 reductases are involved in desaturation and elongation of fatty acids, cholesterol biosynthesis and drug metabolism. The sequence is that of NADH-cytochrome b5 reductase 2 (cyb5r2) from Xenopus laevis (African clawed frog).